The sequence spans 349 residues: Flavonol synthase/flavanone 3-hydroxylase (349 aa).

Positions 213–310 (DIVYMLKINY…RMSWPVFLEP (98 aa)) constitute a Fe2OG dioxygenase domain. His238, Asp240, and His291 together coordinate Fe cation.

This sequence belongs to the iron/ascorbate-dependent oxidoreductase family. Fe cation is required as a cofactor. The cofactor is L-ascorbate.

It localises to the cytoplasm. The catalysed reaction is a (2R,3R)-dihydroflavonol + 2-oxoglutarate + O2 = a flavonol + succinate + CO2 + H2O. It catalyses the reaction a (2S)-flavan-4-one + 2-oxoglutarate + O2 = a (2R,3R)-dihydroflavonol + succinate + CO2. It participates in secondary metabolite biosynthesis; flavonoid biosynthesis. Functionally, catalyzes the formation of flavonols from dihydroflavonols. It can act on dihydrokaempferol to produce kaempferol, on dihydroquercetin to produce quercitin and on dihydromyricetin to produce myricetin. The protein is Flavonol synthase/flavanone 3-hydroxylase of Solanum tuberosum (Potato).